A 257-amino-acid polypeptide reads, in one-letter code: Probable pectate lyase G (257 aa).

Residues methionine 1–alanine 24 form the signal peptide.

It belongs to the polysaccharide lyase 3 family. The cofactor is Ca(2+).

It localises to the secreted. It catalyses the reaction Eliminative cleavage of (1-&gt;4)-alpha-D-galacturonan to give oligosaccharides with 4-deoxy-alpha-D-galact-4-enuronosyl groups at their non-reducing ends.. Its function is as follows. Pectinolytic enzyme consist of four classes of enzymes: pectin lyase, polygalacturonase, pectin methylesterase and rhamnogalacturonase. Among pectinolytic enzymes, pectin lyase is the most important in depolymerization of pectin, since it cleaves internal glycosidic bonds of highly methylated pectins. Favors pectate, the anion, over pectin, the methyl ester. The protein is Probable pectate lyase G (plyG) of Emericella nidulans (strain FGSC A4 / ATCC 38163 / CBS 112.46 / NRRL 194 / M139) (Aspergillus nidulans).